The sequence spans 512 residues: Cytochrome P450 26B1 (512 aa).

C441 provides a ligand contact to heme.

It belongs to the cytochrome P450 family. Heme is required as a cofactor.

The protein resides in the endoplasmic reticulum membrane. Its subcellular location is the microsome membrane. It catalyses the reaction all-trans-retinoate + reduced [NADPH--hemoprotein reductase] + O2 = all-trans-4-hydroxyretinoate + oxidized [NADPH--hemoprotein reductase] + H2O + H(+). It carries out the reaction all-trans-retinoate + reduced [NADPH--hemoprotein reductase] + O2 = all-trans-18-hydroxyretinoate + oxidized [NADPH--hemoprotein reductase] + H2O + H(+). Its function is as follows. A cytochrome P450 monooxygenase involved in the metabolism of retinoates (RAs), the active metabolites of vitamin A, and critical signaling molecules in animals. RAs exist as at least four different isomers: all-trans-RA (atRA), 9-cis-RA, 13-cis-RA, and 9,13-dicis-RA, where atRA is considered to be the biologically active isomer, although 9-cis-RA and 13-cis-RA also have activity. Catalyzes the hydroxylation of atRA primarily at C-4 and C-18, thereby contributing to the regulation of atRA homeostasis and signaling. Hydroxylation of atRA limits its biological activity and initiates a degradative process leading to its eventual elimination. Involved in the convertion of atRA to all-trans-4-oxo-RA. Can oxidize all-trans-13,14-dihydroretinoate (DRA) to metabolites which could include all-trans-4-oxo-DRA, all-trans-4-hydroxy-DRA, all-trans-5,8-epoxy-DRA, and all-trans-18-hydroxy-DRA. Shows preference for the following substrates: atRA &gt; 9-cis-RA &gt; 13-cis-RA. Plays a central role in germ cell development: acts by degrading RAs in the developing testis, preventing STRA8 expression, thereby leading to delay of meiosis. Required for the maintenance of the undifferentiated state of male germ cells during embryonic development in Sertoli cells, inducing arrest in G0 phase of the cell cycle and preventing meiotic entry. Plays a role in skeletal development, both at the level of patterning and in the ossification of bone and the establishment of some synovial joints. Essential for postnatal survival. Also has a significant activity in oxidation of tazarotenic acid and may therefore metabolize that xenobiotic in vivo. The polypeptide is Cytochrome P450 26B1 (Cyp26b1) (Mus musculus (Mouse)).